Consider the following 285-residue polypeptide: 3-methyl-2-oxobutanoate hydroxymethyltransferase (285 aa).

Positions 1-22 (MSEHNVYGAAQPAQPGQPAQPR) are disordered. A compositionally biased stretch (low complexity) spans 8-21 (GAAQPAQPGQPAQP). Residues D66 and D105 each contribute to the Mg(2+) site. Residues 66 to 67 (DS), D105, and K135 contribute to the 3-methyl-2-oxobutanoate site. Mg(2+) is bound at residue E137. E203 serves as the catalytic Proton acceptor.

This sequence belongs to the PanB family. In terms of assembly, homodecamer; pentamer of dimers. Mg(2+) serves as cofactor.

The protein localises to the cytoplasm. The catalysed reaction is 3-methyl-2-oxobutanoate + (6R)-5,10-methylene-5,6,7,8-tetrahydrofolate + H2O = 2-dehydropantoate + (6S)-5,6,7,8-tetrahydrofolate. The protein operates within cofactor biosynthesis; (R)-pantothenate biosynthesis; (R)-pantoate from 3-methyl-2-oxobutanoate: step 1/2. In terms of biological role, catalyzes the reversible reaction in which hydroxymethyl group from 5,10-methylenetetrahydrofolate is transferred onto alpha-ketoisovalerate to form ketopantoate. The protein is 3-methyl-2-oxobutanoate hydroxymethyltransferase of Mycolicibacterium paratuberculosis (strain ATCC BAA-968 / K-10) (Mycobacterium paratuberculosis).